A 60-amino-acid polypeptide reads, in one-letter code: MFAKLYRGLTYVTNKILSTLLSHHSIHYCINSFKPTTLAIIILLHPCCRCNVYIIRCIHH.

This is an uncharacterized protein from Saccharomyces cerevisiae (strain ATCC 204508 / S288c) (Baker's yeast).